A 385-amino-acid polypeptide reads, in one-letter code: 8-amino-7-oxononanoate synthase (385 aa).

Arg-27 serves as a coordination point for substrate. 105–106 (GY) provides a ligand contact to pyridoxal 5'-phosphate. Residue His-130 participates in substrate binding. Pyridoxal 5'-phosphate-binding positions include Ser-176, 201-204 (DEAH), and 232-235 (TMSK). Lys-235 carries the N6-(pyridoxal phosphate)lysine modification. Position 345 (Thr-345) interacts with substrate.

The protein belongs to the class-II pyridoxal-phosphate-dependent aminotransferase family. BioF subfamily. As to quaternary structure, homodimer. Pyridoxal 5'-phosphate is required as a cofactor.

The enzyme catalyses 6-carboxyhexanoyl-[ACP] + L-alanine + H(+) = (8S)-8-amino-7-oxononanoate + holo-[ACP] + CO2. The protein operates within cofactor biosynthesis; biotin biosynthesis. Functionally, catalyzes the decarboxylative condensation of pimeloyl-[acyl-carrier protein] and L-alanine to produce 8-amino-7-oxononanoate (AON), [acyl-carrier protein], and carbon dioxide. In Mycobacterium leprae (strain Br4923), this protein is 8-amino-7-oxononanoate synthase.